Consider the following 240-residue polypeptide: Transposase for insertion sequence element IS3411 (240 aa).

The Integrase catalytic domain occupies 125-240 (VAERPDQLWV…RASMVFTKRR (116 aa)).

Its function is as follows. Involved in the transposition of the insertion sequence. This Escherichia coli protein is Transposase for insertion sequence element IS3411.